The chain runs to 431 residues: Histidine--tRNA ligase (431 aa).

Belongs to the class-II aminoacyl-tRNA synthetase family. In terms of assembly, homodimer.

Its subcellular location is the cytoplasm. The enzyme catalyses tRNA(His) + L-histidine + ATP = L-histidyl-tRNA(His) + AMP + diphosphate + H(+). The protein is Histidine--tRNA ligase of Levilactobacillus brevis (strain ATCC 367 / BCRC 12310 / CIP 105137 / JCM 1170 / LMG 11437 / NCIMB 947 / NCTC 947) (Lactobacillus brevis).